We begin with the raw amino-acid sequence, 396 residues long: Calreticulin (396 aa).

An N-terminal signal peptide occupies residues 1–15; it reads MKSLCLLAIVAVVSA. Cysteine 101 and cysteine 133 form a disulfide bridge. 4 residues coordinate an alpha-D-glucoside: tyrosine 105, lysine 107, tyrosine 124, and aspartate 131. 7 tandem repeats follow at residues 186–197, 205–216, 222–233, 239–250, 254–264, 268–278, and 282–292. Residues 186–250 are 4 X approximate repeats; that stretch reads AQTGSLEEDW…DAKKPEDWDD (65 aa). The segment at 193–301 is P-domain; that stretch reads EDWDLLPAKK…PEYTPDDELY (109 aa). The span at 202–212 shows a compositional bias: basic and acidic residues; it reads KIKDPDAKKPE. The interval 202–250 is disordered; sequence KIKDPDAKKPEDWDEREYIDDAEDVKPEDWEKPEHIPDPDAKKPEDWDD. Residues 213-224 are compositionally biased toward acidic residues; the sequence is DWDEREYIDDAE. Positions 225 to 246 are enriched in basic and acidic residues; sequence DVKPEDWEKPEHIPDPDAKKPE. The segment at 254 to 292 is 3 X approximate repeats; the sequence is GEWEPPMIDNPEYKGEWKPKQIKNPAYKGKWIHPEIENP. The C-domain stretch occupies residues 302–396; sequence LYENWGAIGF…KEEEEGHDEL (95 aa). Residue aspartate 312 participates in an alpha-D-glucoside binding. Basic and acidic residues predominate over residues 342–380; the sequence is FDKLKTVEKEKKEKADEEARKVEEEARKKAEEEKEAKKD. A disordered region spans residues 342-396; it reads FDKLKTVEKEKKEKADEEARKVEEEARKKAEEEKEAKKDDDEEEEKEEEEGHDEL. Over residues 381 to 396 the composition is skewed to acidic residues; the sequence is DDEEEEKEEEEGHDEL. A Prevents secretion from ER motif is present at residues 393-396; it reads HDEL.

It belongs to the calreticulin family.

The protein resides in the endoplasmic reticulum lumen. Functionally, molecular calcium-binding chaperone promoting folding, oligomeric assembly and quality control in the ER via the calreticulin/calnexin cycle. This lectin may interact transiently with almost all of the monoglucosylated glycoproteins that are synthesized in the ER. Probably by controlling the folding of extracellular matrix protein unc-52/Perlecan, may play a role in the formation of fibrous organelles, a hemidesmosome-like structure attaching muscles to the epidermis. Protects dopaminergic neurons against oxidative stress-induced neurodegeneration. The chain is Calreticulin (crt-1) from Caenorhabditis briggsae.